Consider the following 319-residue polypeptide: Pantothenate kinase (319 aa).

97 to 104 is a binding site for ATP; it reads GSVAVGKS.

The protein belongs to the prokaryotic pantothenate kinase family.

It is found in the cytoplasm. The catalysed reaction is (R)-pantothenate + ATP = (R)-4'-phosphopantothenate + ADP + H(+). It participates in cofactor biosynthesis; coenzyme A biosynthesis; CoA from (R)-pantothenate: step 1/5. In Mesorhizobium japonicum (strain LMG 29417 / CECT 9101 / MAFF 303099) (Mesorhizobium loti (strain MAFF 303099)), this protein is Pantothenate kinase.